Consider the following 133-residue polypeptide: Ribosome-binding factor A (133 aa).

This sequence belongs to the RbfA family. In terms of assembly, monomer. Binds 30S ribosomal subunits, but not 50S ribosomal subunits or 70S ribosomes.

The protein localises to the cytoplasm. One of several proteins that assist in the late maturation steps of the functional core of the 30S ribosomal subunit. Associates with free 30S ribosomal subunits (but not with 30S subunits that are part of 70S ribosomes or polysomes). Required for efficient processing of 16S rRNA. May interact with the 5'-terminal helix region of 16S rRNA. This Trichormus variabilis (strain ATCC 29413 / PCC 7937) (Anabaena variabilis) protein is Ribosome-binding factor A.